Reading from the N-terminus, the 99-residue chain is MMNMQNMMRQAQKLQKQMEQKQADLAAMQFTGKSAQDLVTATFTGDKKLVGIDFKEAVVDPEDVETLQDMTTQAINDALTQIDEATKKTLGAFAGKLPF.

This sequence belongs to the YbaB/EbfC family. As to quaternary structure, homodimer.

It is found in the cytoplasm. Its subcellular location is the nucleoid. In terms of biological role, binds to DNA and alters its conformation. May be involved in regulation of gene expression, nucleoid organization and DNA protection. The sequence is that of Nucleoid-associated protein SpyM3_1606 from Streptococcus pyogenes serotype M3 (strain ATCC BAA-595 / MGAS315).